A 162-amino-acid chain; its full sequence is NADH-quinone oxidoreductase subunit I (162 aa).

4Fe-4S ferredoxin-type domains follow at residues 53-83 (LRRY…IEAE) and 93-122 (TRYD…EGPN). Residues C63, C66, C69, C73, C102, C105, C108, and C112 each coordinate [4Fe-4S] cluster.

Belongs to the complex I 23 kDa subunit family. In terms of assembly, NDH-1 is composed of 14 different subunits. Subunits NuoA, H, J, K, L, M, N constitute the membrane sector of the complex. [4Fe-4S] cluster is required as a cofactor.

It localises to the cell inner membrane. The enzyme catalyses a quinone + NADH + 5 H(+)(in) = a quinol + NAD(+) + 4 H(+)(out). Its function is as follows. NDH-1 shuttles electrons from NADH, via FMN and iron-sulfur (Fe-S) centers, to quinones in the respiratory chain. The immediate electron acceptor for the enzyme in this species is believed to be ubiquinone. Couples the redox reaction to proton translocation (for every two electrons transferred, four hydrogen ions are translocated across the cytoplasmic membrane), and thus conserves the redox energy in a proton gradient. The polypeptide is NADH-quinone oxidoreductase subunit I (Maricaulis maris (strain MCS10) (Caulobacter maris)).